A 1543-amino-acid chain; its full sequence is DNA-directed RNA polymerase subunit beta' (1543 aa).

The Zn(2+) site is built by C60, C62, C75, and C78. D627, D629, and D631 together coordinate Mg(2+). Zn(2+) contacts are provided by C1017, C1097, C1104, and C1107. Disordered stretches follow at residues 1466-1490 (PADR…APPR) and 1522-1543 (AEEG…EENV).

Belongs to the RNA polymerase beta' chain family. In terms of assembly, the RNAP catalytic core consists of 2 alpha, 1 beta, 1 beta' and 1 omega subunit. When a sigma factor is associated with the core the holoenzyme is formed, which can initiate transcription. The cofactor is Mg(2+). Zn(2+) is required as a cofactor.

It catalyses the reaction RNA(n) + a ribonucleoside 5'-triphosphate = RNA(n+1) + diphosphate. DNA-dependent RNA polymerase catalyzes the transcription of DNA into RNA using the four ribonucleoside triphosphates as substrates. The protein is DNA-directed RNA polymerase subunit beta' of Herpetosiphon aurantiacus (strain ATCC 23779 / DSM 785 / 114-95).